Reading from the N-terminus, the 363-residue chain is Spermidine/putrescine import ATP-binding protein PotA 2 (363 aa).

Residues 6-236 enclose the ABC transporter domain; it reads LEIRNVTRRF…PRSRFVADFI (231 aa). ATP is bound at residue 38–45; sequence GPSGCGKT.

This sequence belongs to the ABC transporter superfamily. Spermidine/putrescine importer (TC 3.A.1.11.1) family. As to quaternary structure, the complex is composed of two ATP-binding proteins (PotA), two transmembrane proteins (PotB and PotC) and a solute-binding protein (PotD).

The protein resides in the cell inner membrane. The catalysed reaction is ATP + H2O + polyamine-[polyamine-binding protein]Side 1 = ADP + phosphate + polyamineSide 2 + [polyamine-binding protein]Side 1.. Functionally, part of the ABC transporter complex PotABCD involved in spermidine/putrescine import. Responsible for energy coupling to the transport system. The chain is Spermidine/putrescine import ATP-binding protein PotA 2 from Pseudomonas aeruginosa (strain ATCC 15692 / DSM 22644 / CIP 104116 / JCM 14847 / LMG 12228 / 1C / PRS 101 / PAO1).